A 155-amino-acid polypeptide reads, in one-letter code: Zinc finger HIT domain-containing protein 3 (155 aa).

Cysteine 11, cysteine 14, cysteine 22, cysteine 25, cysteine 30, cysteine 34, histidine 38, and cysteine 42 together coordinate Zn(2+). An HIT-type zinc finger spans residues 11–42; it reads CVICLEKPKYRCPACRVPYCSVVCFRKHKEQC. A Phosphoserine modification is found at serine 80.

As to quaternary structure, thyroid receptor interacting proteins (TRIPs) specifically interact with the ligand binding domain of the thyroid receptor (TR). Requires the presence of thyroid hormone for its interaction. Interacts with NUFIP1. Interacts (via HIT-type zinc finger) with the RUVBL1/RUVBL2 complex in the presence of ADP.

It is found in the cytoplasm. It localises to the nucleus. The sequence is that of Zinc finger HIT domain-containing protein 3 (ZNHIT3) from Homo sapiens (Human).